A 1755-amino-acid polypeptide reads, in one-letter code: Transposon Ty1-GR1 Gag-Pol polyprotein (1755 aa).

The segment covering 1-16 (MESQQLSQHSHISHGS) has biased composition (low complexity). 3 disordered regions span residues 1–93 (MESQ…MMTQ), 126–173 (PQSQ…RPPP), and 352–421 (GSRN…SKST). Polar residues-rich tracts occupy residues 48 to 60 (TKANSQQTTTPAS), 71 to 93 (SPQTAQSHSPQNGPYPQQCMMTQ), and 127 to 152 (QSQFPQYPSSVGTPLSTPSPESGNTF). A compositionally biased stretch (low complexity) spans 153–165 (TDSSSADSDMTST). The segment at 299–401 (NNGIHINNKV…NSKSKTARAH (103 aa)) is RNA-binding. A compositionally biased stretch (low complexity) spans 402-418 (NVSTSNNSPSTDNDSIS). A Phosphoserine modification is found at serine 416. The For protease activity; shared with dimeric partner role is filled by aspartate 461. Residues 583–640 (NVHTSESTRKYPYPFIHRMLAHANAQTIRYSLKNNTITYFNESDVDWSSAIDYQCPDC) form an integrase-type zinc finger-like region. One can recognise an Integrase catalytic domain in the interval 660–835 (NSYEPFQYLH…AGLDISTLLP (176 aa)). Residues aspartate 671 and aspartate 736 each coordinate Mg(2+). Disordered regions lie at residues 956–1087 (SKAV…ETEK), 1092–1111 (RSPSIDASPPENNSSHNIVP), and 1130–1187 (DLPL…DNET). The segment covering 960–969 (SPTDSTPPST) has biased composition (low complexity). Residues 1005–1015 (STPQISNIEST) show a composition bias toward polar residues. Positions 1038-1053 (ESSHASKSKDFRHSDS) are enriched in basic and acidic residues. Polar residues-rich tracts occupy residues 1054 to 1082 (YSENETNHTNVPISSTGGTNNKTVPQISD) and 1101 to 1111 (PENNSSHNIVP). Residues 1178-1212 (KKRSLEDNETEIKVSRDTWNTKNMRSLEPPRSKKR) carry the Bipartite nuclear localization signal motif. The 139-residue stretch at 1338 to 1476 (NNYYITQLDI…DILGLEIKYQ (139 aa)) folds into the Reverse transcriptase Ty1/copia-type domain. Mg(2+) is bound by residues aspartate 1346, aspartate 1427, aspartate 1428, aspartate 1610, glutamate 1652, and aspartate 1685. The 143-residue stretch at 1610–1752 (DASYGNQPYY…IKTFKLLTNK (143 aa)) folds into the RNase H Ty1/copia-type domain.

In terms of assembly, the capsid protein forms a homotrimer, from which the VLPs are assembled. The protease is a homodimer, whose active site consists of two apposed aspartic acid residues. Post-translationally, initially, virus-like particles (VLPs) are composed of the structural unprocessed proteins Gag and Gag-Pol, and also contain the host initiator methionine tRNA (tRNA(i)-Met) which serves as a primer for minus-strand DNA synthesis, and a dimer of genomic Ty RNA. Processing of the polyproteins occurs within the particle and proceeds by an ordered pathway, called maturation. First, the protease (PR) is released by autocatalytic cleavage of the Gag-Pol polyprotein yielding capsid protein p45 and a Pol-p154 precursor protein. This cleavage is a prerequisite for subsequent processing of Pol-p154 at the remaining sites to release the mature structural and catalytic proteins. Maturation takes place prior to the RT reaction and is required to produce transposition-competent VLPs.

Its subcellular location is the cytoplasm. The protein resides in the nucleus. The enzyme catalyses DNA(n) + a 2'-deoxyribonucleoside 5'-triphosphate = DNA(n+1) + diphosphate. It catalyses the reaction Endonucleolytic cleavage to 5'-phosphomonoester.. Its function is as follows. Capsid protein (CA) is the structural component of the virus-like particle (VLP), forming the shell that encapsulates the retrotransposons dimeric RNA genome. The particles are assembled from trimer-clustered units and there are holes in the capsid shells that allow for the diffusion of macromolecules. CA also has nucleocapsid-like chaperone activity, promoting primer tRNA(i)-Met annealing to the multipartite primer-binding site (PBS), dimerization of Ty1 RNA and initiation of reverse transcription. The aspartyl protease (PR) mediates the proteolytic cleavages of the Gag and Gag-Pol polyproteins after assembly of the VLP. Functionally, reverse transcriptase/ribonuclease H (RT) is a multifunctional enzyme that catalyzes the conversion of the retro-elements RNA genome into dsDNA within the VLP. The enzyme displays a DNA polymerase activity that can copy either DNA or RNA templates, and a ribonuclease H (RNase H) activity that cleaves the RNA strand of RNA-DNA heteroduplexes during plus-strand synthesis and hydrolyzes RNA primers. The conversion leads to a linear dsDNA copy of the retrotransposon that includes long terminal repeats (LTRs) at both ends. In terms of biological role, integrase (IN) targets the VLP to the nucleus, where a subparticle preintegration complex (PIC) containing at least integrase and the newly synthesized dsDNA copy of the retrotransposon must transit the nuclear membrane. Once in the nucleus, integrase performs the integration of the dsDNA into the host genome. The protein is Transposon Ty1-GR1 Gag-Pol polyprotein (TY1B-GR1) of Saccharomyces cerevisiae (strain ATCC 204508 / S288c) (Baker's yeast).